Here is a 144-residue protein sequence, read N- to C-terminus: Large ribosomal subunit protein uL11 (144 aa).

Belongs to the universal ribosomal protein uL11 family. In terms of assembly, part of the ribosomal stalk of the 50S ribosomal subunit. Interacts with L10 and the large rRNA to form the base of the stalk. L10 forms an elongated spine to which L12 dimers bind in a sequential fashion forming a multimeric L10(L12)X complex. Post-translationally, one or more lysine residues are methylated.

Functionally, forms part of the ribosomal stalk which helps the ribosome interact with GTP-bound translation factors. This chain is Large ribosomal subunit protein uL11, found in Frankia alni (strain DSM 45986 / CECT 9034 / ACN14a).